The chain runs to 528 residues: Keratin, type II cytoskeletal 78 (528 aa).

The tract at residues 1-104 (MSLSPCRARR…DPQFQVVRTQ (104 aa)) is head. The interval 23–45 (VGRGRTGFSSRSLSSFGGCRGGS) is disordered. A compositionally biased stretch (low complexity) spans 24–39 (GRGRTGFSSRSLSSFG). Positions 105-140 (ETQQIRVLNNQFASFIDKVRFLEQQNKVLETKWHLL) are coil 1A. The region spanning 105–418 (ETQQIRVLNN…RLLEGEECRM (314 aa)) is the IF rod domain. The interval 141–159 (QQQGLSDRPQGLESFFEAY) is linker 1. The coil 1B stretch occupies residues 160–252 (LVRLRTQLEE…LYEEELGQLQ (93 aa)). The linker 12 stretch occupies residues 253–275 (TQASDMSVVLSMDNNRCLDFRDL). Positions 276-415 (IAEVRARYEE…TYRRLLEGEE (140 aa)) are coil 2. The segment at 416–528 (CRMSGECASQ…ESSLKTSVTY (113 aa)) is tail.

Belongs to the intermediate filament family. As to quaternary structure, heterotetramer of two type I and two type II keratins.

This chain is Keratin, type II cytoskeletal 78 (KRT78), found in Bos taurus (Bovine).